The chain runs to 601 residues: Probable HECT-type ubiquitin ligase-interacting protein creD (601 aa).

2 disordered regions span residues 374–397 (EVDP…GTLS) and 454–496 (VSTD…GMAT). A compositionally biased stretch (low complexity) spans 455-473 (STDSFGPSSGSNSQSPASP). A compositionally biased stretch (basic and acidic residues) spans 475–489 (LSRRPSDEGYHDHDY).

This sequence belongs to the arrestin family. As to quaternary structure, interacts with hulA.

Component of the regulatory network controlling carbon source utilization through ubiquitination and deubiquitination involving creA, creB, creC, creD and acrB. May be involved in signaling by recognizing appropriately phosphorylated substrates via its arrestin domains and then recruit a HECT-type ubiquitin ligase such as hulA, leading to ubiquitination of the substrate, providing a link between ubiquitination and phosphorylation in protein regulation and stability. The polypeptide is Probable HECT-type ubiquitin ligase-interacting protein creD (creD) (Aspergillus fumigatus (strain CBS 144.89 / FGSC A1163 / CEA10) (Neosartorya fumigata)).